The following is a 125-amino-acid chain: Probable growth factor FPV211 (125 aa).

Positions 1–48 (MKEPLIEVKREYNLIKTLTGKKFVVSTSIVVVLLIINMIFYGIRIHEL) are cleaved as a signal peptide. The EGF-like domain occupies 80 to 120 (LFEKCKSKFNNFCIYGECMNIINLDKKFCICNKGYTGNRCD). Disulfide bonds link C84/C97, C92/C108, and C110/C119.

It is found in the secreted. This is Probable growth factor FPV211 from Vertebrata (FPV).